The chain runs to 579 residues: Arginine--tRNA ligase (579 aa).

Positions 127 to 137 match the 'HIGH' region motif; the sequence is ANPTGPLHVGH.

Belongs to the class-I aminoacyl-tRNA synthetase family. As to quaternary structure, monomer.

It localises to the cytoplasm. It catalyses the reaction tRNA(Arg) + L-arginine + ATP = L-arginyl-tRNA(Arg) + AMP + diphosphate. The polypeptide is Arginine--tRNA ligase (Acidithiobacillus ferrooxidans (strain ATCC 23270 / DSM 14882 / CIP 104768 / NCIMB 8455) (Ferrobacillus ferrooxidans (strain ATCC 23270))).